The primary structure comprises 655 residues: MGIFTIASQHIRFAVKLASAIVLALFVGFHFQLETPRWAVLTAAIVAAGPAFAAGGEPYSGAIRYRGMLRIIGTFIGCIAALTIIILMIRTPLLMVLVCCIWAGFCTWLSSLVKVENSYAWGLAGYTALIIVITIQTEPLLAPQFAVERCSEIVIGIVCAIVADLLFSPRSIKQEVDRELDALIVSQYQLMQLCIKHGDSEEVDKAWSGLVRRTQALEGMRSNLNMESSRWARANRRLKAINTVSLTLITQACETYLIQNTRPESVTDTFRELFAEPVETVQDVHKQLKRMRRVIAWTGERDTPVTIYTWVGAATRYLLLKRGVIGNTKISAAEEEVLQGEVVIKAESAERHHAMVNFWRTTLACMLGTLFWLWTGWTSGSGAMVMIAVVTALAMRLPNPRMVAIDFLYGTIAALPLGALYFLVILPSTQQSMLLLCISLAVMAFFIGIEVQKRRLGSLGALASTINILVLDNPMTFHFSQFLDSALGQLVGCFLAMMVILLVRDNSQARTGRVLLNQFVSAAVSSMTTNTARRKENHLPALYQQLFLLLNKFPGDIARFRLALTMIIAHQRLRNAPVPINDDLSAFHRQLRRTADHVLSASSDDKRRRYFKQLLEELDVYQEKLRVWEAPPQVTEPVARLVFMLHRYQNVLTDN.

11 helical membrane passes run 13 to 33, 38 to 58, 69 to 89, 93 to 113, 121 to 141, 152 to 172, 370 to 390, 407 to 427, 431 to 451, 459 to 479, and 482 to 502; these read FAVK…HFQL, WAVL…GGEP, LRII…ILMI, LLMV…SSLV, WGLA…EPLL, EIVI…PRSI, LFWL…IAVV, FLYG…VILP, QSML…GIEV, LGAL…TFHF, and FLDS…VILL.

This sequence belongs to the aromatic acid exporter ArAE (TC 2.A.85) family.

The protein localises to the cell inner membrane. Forms an efflux pump with AaeA. Could function as a metabolic relief valve, allowing to eliminate certain compounds when they accumulate to high levels in the cell. This is p-hydroxybenzoic acid efflux pump subunit AaeB from Enterobacter cloacae subsp. cloacae (strain ATCC 13047 / DSM 30054 / NBRC 13535 / NCTC 10005 / WDCM 00083 / NCDC 279-56).